Reading from the N-terminus, the 276-residue chain is ADP-dependent (S)-NAD(P)H-hydrate dehydratase (276 aa).

The YjeF C-terminal domain maps to 7–274 (METLNSINIP…NEIPYAMKQL (268 aa)). Positions 42, 105, and 154 each coordinate (6S)-NADPHX. Position 216 (G216) interacts with AMP. D217 serves as a coordination point for (6S)-NADPHX.

It belongs to the NnrD/CARKD family. Homotetramer. It depends on Mg(2+) as a cofactor.

It carries out the reaction (6S)-NADHX + ADP = AMP + phosphate + NADH + H(+). The enzyme catalyses (6S)-NADPHX + ADP = AMP + phosphate + NADPH + H(+). In terms of biological role, catalyzes the dehydration of the S-form of NAD(P)HX at the expense of ADP, which is converted to AMP. Together with NAD(P)HX epimerase, which catalyzes the epimerization of the S- and R-forms, the enzyme allows the repair of both epimers of NAD(P)HX, a damaged form of NAD(P)H that is a result of enzymatic or heat-dependent hydration. The polypeptide is ADP-dependent (S)-NAD(P)H-hydrate dehydratase (Staphylococcus aureus (strain NCTC 8325 / PS 47)).